We begin with the raw amino-acid sequence, 244 residues long: Ubiquinone/menaquinone biosynthesis C-methyltransferase UbiE (244 aa).

S-adenosyl-L-methionine contacts are provided by residues threonine 70, aspartate 91, and 117–118 (DA).

The protein belongs to the class I-like SAM-binding methyltransferase superfamily. MenG/UbiE family.

It catalyses the reaction a 2-demethylmenaquinol + S-adenosyl-L-methionine = a menaquinol + S-adenosyl-L-homocysteine + H(+). The catalysed reaction is a 2-methoxy-6-(all-trans-polyprenyl)benzene-1,4-diol + S-adenosyl-L-methionine = a 5-methoxy-2-methyl-3-(all-trans-polyprenyl)benzene-1,4-diol + S-adenosyl-L-homocysteine + H(+). Its pathway is quinol/quinone metabolism; menaquinone biosynthesis; menaquinol from 1,4-dihydroxy-2-naphthoate: step 2/2. It participates in cofactor biosynthesis; ubiquinone biosynthesis. Methyltransferase required for the conversion of demethylmenaquinol (DMKH2) to menaquinol (MKH2) and the conversion of 2-polyprenyl-6-methoxy-1,4-benzoquinol (DDMQH2) to 2-polyprenyl-3-methyl-6-methoxy-1,4-benzoquinol (DMQH2). This Chromobacterium violaceum (strain ATCC 12472 / DSM 30191 / JCM 1249 / CCUG 213 / NBRC 12614 / NCIMB 9131 / NCTC 9757 / MK) protein is Ubiquinone/menaquinone biosynthesis C-methyltransferase UbiE.